We begin with the raw amino-acid sequence, 41 residues long: Bacteriocin bavaricin-A (41 aa).

It belongs to the bacteriocin class IIA/YGNGV family.

It localises to the secreted. In terms of biological role, this heat stable bacteriocin shows activity against species of Lactobacillus, Listeria monocytogenes, Pediococcus, Enterococcus, Leuconostoc and Lactococcus. The sequence is that of Bacteriocin bavaricin-A from Latilactobacillus sakei (Lactobacillus sakei).